The chain runs to 360 residues: Peptide chain release factor 1 (360 aa).

At Q237 the chain carries N5-methylglutamine.

It belongs to the prokaryotic/mitochondrial release factor family. Methylated by PrmC. Methylation increases the termination efficiency of RF1.

The protein resides in the cytoplasm. Peptide chain release factor 1 directs the termination of translation in response to the peptide chain termination codons UAG and UAA. In Pseudomonas fluorescens (strain ATCC BAA-477 / NRRL B-23932 / Pf-5), this protein is Peptide chain release factor 1.